The sequence spans 246 residues: 4-aminobenzoate synthase (246 aa).

The Fe(2+) site is built by Glu88, His95, Glu149, His181, Asp185, and His188.

Belongs to the CADD family. Homodimer. Requires Fe(2+) as cofactor. It depends on Mn(2+) as a cofactor.

Its function is as follows. Involved in de novo para-aminobenzoate (PABA) biosynthesis. Acts as a self-sacrificing or 'suicide' enzyme that utilizes its own active site tyrosine residue(s) as the substrate for PABA synthesis. The side chain of the tyrosine residue is released from the protein backbone via cleavage of the C(alpha)-C(beta) bond, leaving a glycine in place of the original tyrosine residue. Reaction requires O(2) and a reduced dimetal cofactor. This Nitrosomonas europaea (strain ATCC 19718 / CIP 103999 / KCTC 2705 / NBRC 14298) protein is 4-aminobenzoate synthase.